The following is a 144-amino-acid chain: Putative lipoprotein MAH_0816 (144 aa).

A signal peptide spans 1 to 24 (MRWPMQNRTTAVIAVALATTALVA). The N-palmitoyl cysteine moiety is linked to residue C25. C25 carries the S-diacylglycerol cysteine lipid modification.

The protein belongs to the mycobacterial 19 kDa antigen family.

The protein resides in the cell membrane. This is Putative lipoprotein MAH_0816 from Mycobacterium avium subsp. hominissuis (strain TH135).